The sequence spans 270 residues: 25S rRNA adenine-N(1) methyltransferase (270 aa).

S-adenosyl-L-methionine is bound by residues G111 and D131.

This sequence belongs to the BMT2 family.

Its subcellular location is the nucleus. The protein resides in the nucleolus. S-adenosyl-L-methionine-dependent methyltransferase that specifically methylates the N(1) position of an adenine present in helix 65 in 25S rRNA. This Schizosaccharomyces pombe (strain 972 / ATCC 24843) (Fission yeast) protein is 25S rRNA adenine-N(1) methyltransferase.